The following is a 154-amino-acid chain: Transcriptional repressor NrdR (154 aa).

The segment at 3–34 (CPYCRHPDSRVVDSREADDGQLIRRRRSCPEC) is a zinc-finger region. In terms of domain architecture, ATP-cone spans 46 to 136 (LAVVKRSGVT…VYRSFESLAD (91 aa)).

Belongs to the NrdR family. Zn(2+) serves as cofactor.

In terms of biological role, negatively regulates transcription of bacterial ribonucleotide reductase nrd genes and operons by binding to NrdR-boxes. In Salinispora tropica (strain ATCC BAA-916 / DSM 44818 / JCM 13857 / NBRC 105044 / CNB-440), this protein is Transcriptional repressor NrdR.